Reading from the N-terminus, the 534-residue chain is GTPase Obg (534 aa).

The region spanning 2 to 159 (ASFVDRVVLH…SDIVLELKSI (158 aa)) is the Obg domain. The tract at residues 63 to 82 (APHRHASNGGQGMGDWRGGK) is disordered. Residues 71-82 (GGQGMGDWRGGK) show a composition bias toward gly residues. Residues 160-343 (ADIALVGFPS…LSFAMAELVT (184 aa)) form the OBG-type G domain. Residues 166–173 (GFPSAGKS), 191–195 (FTTLI), 212–215 (DVPG), 295–298 (NKID), and 324–326 (SAS) each bind GTP. Mg(2+) is bound by residues Ser-173 and Thr-193. In terms of domain architecture, OCT spans 363-449 (PRAVNRKEFT…ENAVVFDWEP (87 aa)). Residues 456 to 534 (ELLSGPRGTD…AASTDDGDAL (79 aa)) form a disordered region. Basic and acidic residues-rich tracts occupy residues 464-504 (TDPR…ERKA) and 512-526 (SARR…REAA).

The protein belongs to the TRAFAC class OBG-HflX-like GTPase superfamily. OBG GTPase family. Monomer. Mg(2+) is required as a cofactor.

The protein localises to the cytoplasm. Its function is as follows. An essential GTPase which binds GTP, GDP and possibly (p)ppGpp with moderate affinity, with high nucleotide exchange rates and a fairly low GTP hydrolysis rate. Plays a role in control of the cell cycle, stress response, ribosome biogenesis and in those bacteria that undergo differentiation, in morphogenesis control. The protein is GTPase Obg of Renibacterium salmoninarum (strain ATCC 33209 / DSM 20767 / JCM 11484 / NBRC 15589 / NCIMB 2235).